The primary structure comprises 505 residues: ATP synthase subunit alpha (505 aa).

171-178 (GDRQTGKT) contacts ATP.

Belongs to the ATPase alpha/beta chains family. As to quaternary structure, F-type ATPases have 2 components, CF(1) - the catalytic core - and CF(0) - the membrane proton channel. CF(1) has five subunits: alpha(3), beta(3), gamma(1), delta(1), epsilon(1). CF(0) has three main subunits: a(1), b(2) and c(9-12). The alpha and beta chains form an alternating ring which encloses part of the gamma chain. CF(1) is attached to CF(0) by a central stalk formed by the gamma and epsilon chains, while a peripheral stalk is formed by the delta and b chains.

The protein resides in the cell inner membrane. The catalysed reaction is ATP + H2O + 4 H(+)(in) = ADP + phosphate + 5 H(+)(out). Functionally, produces ATP from ADP in the presence of a proton gradient across the membrane. The alpha chain is a regulatory subunit. In Campylobacter hominis (strain ATCC BAA-381 / DSM 21671 / CCUG 45161 / LMG 19568 / NCTC 13146 / CH001A), this protein is ATP synthase subunit alpha.